A 456-amino-acid polypeptide reads, in one-letter code: Septin-10 (456 aa).

The region spanning 40-306 (QGFCFNILCV…ELYRRCKLQE (267 aa)) is the Septin-type G domain. The segment at 50-57 (GETGIGKS) is G1 motif. GTP contacts are provided by residues 50–57 (GETGIGKS), Gly105, 186–194 (KADTISKSE), Gly240, and Arg255. The interval 102–105 (NTVG) is G3 motif. Residues 185–188 (AKAD) form a G4 motif region. Ser418 is subject to Phosphoserine.

It belongs to the TRAFAC class TrmE-Era-EngA-EngB-Septin-like GTPase superfamily. Septin GTPase family. In terms of assembly, septins polymerize into heterooligomeric protein complexes that form filaments, and can associate with cellular membranes, actin filaments and microtubules. GTPase activity is required for filament formation. Interacts with ADGB. Post-translationally, proteolytically cleaved in vitro in a calmodulin-dependent manner.

The protein resides in the cytoplasm. It is found in the cytoskeleton. It localises to the cell projection. Its subcellular location is the cilium. The protein localises to the flagellum. Its function is as follows. Filament-forming cytoskeletal GTPase. May play a role in cytokinesis (Potential). In Rattus norvegicus (Rat), this protein is Septin-10.